Reading from the N-terminus, the 353-residue chain is Protein RecA (353 aa).

73–80 (GPESSGKT) provides a ligand contact to ATP.

It belongs to the RecA family.

The protein localises to the cytoplasm. Functionally, can catalyze the hydrolysis of ATP in the presence of single-stranded DNA, the ATP-dependent uptake of single-stranded DNA by duplex DNA, and the ATP-dependent hybridization of homologous single-stranded DNAs. It interacts with LexA causing its activation and leading to its autocatalytic cleavage. The chain is Protein RecA from Bordetella avium (strain 197N).